Consider the following 439-residue polypeptide: Cobyrinate a,c-diamide synthase (439 aa).

Residues 238–431 form the GATase cobBQ-type domain; it reads KIAVAYDKAF…AHVNFLGNIE (194 aa). The active-site Nucleophile is the C320.

It belongs to the CobB/CbiA family. Mg(2+) serves as cofactor.

The enzyme catalyses cob(II)yrinate + 2 L-glutamine + 2 ATP + 2 H2O = cob(II)yrinate a,c diamide + 2 L-glutamate + 2 ADP + 2 phosphate + 2 H(+). It functions in the pathway cofactor biosynthesis; adenosylcobalamin biosynthesis; cob(II)yrinate a,c-diamide from sirohydrochlorin (anaerobic route): step 10/10. In terms of biological role, catalyzes the ATP-dependent amidation of the two carboxylate groups at positions a and c of cobyrinate, using either L-glutamine or ammonia as the nitrogen source. This Clostridium tetani (strain Massachusetts / E88) protein is Cobyrinate a,c-diamide synthase.